A 480-amino-acid chain; its full sequence is Protein nucleotidyltransferase YdiU (480 aa).

The ATP site is built by Gly-84, Gly-86, Arg-87, Lys-107, Asp-119, Gly-120, Arg-170, and Arg-177. Asp-246 functions as the Proton acceptor in the catalytic mechanism. Mg(2+) is bound by residues Asn-247 and Asp-256. Residue Asp-256 participates in ATP binding.

Belongs to the SELO family. Requires Mg(2+) as cofactor. It depends on Mn(2+) as a cofactor.

It carries out the reaction L-seryl-[protein] + ATP = 3-O-(5'-adenylyl)-L-seryl-[protein] + diphosphate. The catalysed reaction is L-threonyl-[protein] + ATP = 3-O-(5'-adenylyl)-L-threonyl-[protein] + diphosphate. The enzyme catalyses L-tyrosyl-[protein] + ATP = O-(5'-adenylyl)-L-tyrosyl-[protein] + diphosphate. It catalyses the reaction L-histidyl-[protein] + UTP = N(tele)-(5'-uridylyl)-L-histidyl-[protein] + diphosphate. It carries out the reaction L-seryl-[protein] + UTP = O-(5'-uridylyl)-L-seryl-[protein] + diphosphate. The catalysed reaction is L-tyrosyl-[protein] + UTP = O-(5'-uridylyl)-L-tyrosyl-[protein] + diphosphate. In terms of biological role, nucleotidyltransferase involved in the post-translational modification of proteins. It can catalyze the addition of adenosine monophosphate (AMP) or uridine monophosphate (UMP) to a protein, resulting in modifications known as AMPylation and UMPylation. In Pseudoalteromonas atlantica (strain T6c / ATCC BAA-1087), this protein is Protein nucleotidyltransferase YdiU.